Consider the following 759-residue polypeptide: Protein MTSS 1 (759 aa).

An IMD domain is found at 1-254 (MEAVIEKECS…EQVILDLKGS (254 aa)). Residues 108–157 (LQEQMEEWKKVANQLDKDHAKEYKKARQEIKNKSSDTLKLQKKAKKVDAQ) are a coiled coil. The segment at 259-309 (SYQTPPSSPSTTMSRKSSVCSSLNSVNSSDSRSSGSHSHSPSSHYRYRSSN) is disordered. Threonine 262 bears the Phosphothreonine mark. 4 positions are modified to phosphoserine: serine 265, serine 266, serine 275, and serine 326. The interval 331–354 (QDAFQSKSPSPMPPEAANQLSNGF) is disordered. Threonine 429 carries the phosphothreonine modification. Disordered stretches follow at residues 431 to 472 (QRRK…AATR) and 569 to 759 (KRPA…PRFS). Threonine 607 bears the Phosphothreonine mark. The segment covering 612 to 627 (PIPIKTPVIPVKTPTV) has biased composition (low complexity). Phosphoserine is present on residues serine 648 and serine 651. Residues 660-670 (GVSNIPSSLWS) show a composition bias toward polar residues. Pro residues predominate over residues 675-685 (VNPPLPGPKPS). Residues 731–748 (QGEDMLNAIRRGVKLKKT) form the WH2 domain.

This sequence belongs to the MTSS family. Binds to actin. Strongly expressed in the developing neurons and skeletal and cardiac muscles in embryos. Strongly expressed also in liver, outer layers of the kidney, and in the Purkinje cells of the brain.

The protein resides in the cytoplasm. It localises to the cytoskeleton. Inhibits the nucleation of actin filaments in vitro. The polypeptide is Protein MTSS 1 (Mus musculus (Mouse)).